The sequence spans 186 residues: ATP synthase subunit delta (186 aa).

This sequence belongs to the ATPase delta chain family. In terms of assembly, F-type ATPases have 2 components, F(1) - the catalytic core - and F(0) - the membrane proton channel. F(1) has five subunits: alpha(3), beta(3), gamma(1), delta(1), epsilon(1). F(0) has three main subunits: a(1), b(2) and c(10-14). The alpha and beta chains form an alternating ring which encloses part of the gamma chain. F(1) is attached to F(0) by a central stalk formed by the gamma and epsilon chains, while a peripheral stalk is formed by the delta and b chains.

The protein resides in the cell membrane. F(1)F(0) ATP synthase produces ATP from ADP in the presence of a proton or sodium gradient. F-type ATPases consist of two structural domains, F(1) containing the extramembraneous catalytic core and F(0) containing the membrane proton channel, linked together by a central stalk and a peripheral stalk. During catalysis, ATP synthesis in the catalytic domain of F(1) is coupled via a rotary mechanism of the central stalk subunits to proton translocation. In terms of biological role, this protein is part of the stalk that links CF(0) to CF(1). It either transmits conformational changes from CF(0) to CF(1) or is implicated in proton conduction. This chain is ATP synthase subunit delta, found in Symbiobacterium thermophilum (strain DSM 24528 / JCM 14929 / IAM 14863 / T).